The following is a 485-amino-acid chain: Tektin-5 (485 aa).

Coiled coils occupy residues 113-185 (SRLT…EVNC), 225-251 (QQQM…ALER), 342-385 (FNAR…MAKE), and 423-443 (DDTL…LQLL).

It belongs to the tektin family. As to quaternary structure, microtubule inner protein component of sperm flagellar doublet microtubules. Interacts with TEKT3. Post-translationally, ubiquitinated, leading to its degradation. Deubiquitinated by USP16, promoting its stability.

The protein localises to the cytoplasm. It localises to the cytoskeleton. It is found in the flagellum axoneme. Its function is as follows. Sperm-specific microtubule inner protein (MIP) part of the dynein-decorated doublet microtubules (DMTs) in flagellar axoneme. Forms an extensive interaction network in different conformations that reinforces the helix bundle composed by other tektin proteins (TEKT1 to TEKT4) and MIPs to anchor the tektin bundle onto the tubulin wall of A-tubule of the sperm flagellum. This is Tektin-5 (TEKT5) from Macaca fascicularis (Crab-eating macaque).